Consider the following 220-residue polypeptide: Ribosome biogenesis protein 15 (220 aa).

Positions M1 to D82 are disordered. Residues S9 to L30 show a composition bias toward basic and acidic residues. Residues S39–Q60 are compositionally biased toward acidic residues. One can recognise an RRM domain in the interval G91–K169.

As to quaternary structure, component of the pre-66S ribosomal particle. Interacts with NOP7 and RRP1.

The protein resides in the cytoplasm. Its subcellular location is the nucleus. The protein localises to the nucleolus. Its function is as follows. Involved in the biogenesis of the 60S ribosomal subunit. Required for pre-rRNA processing and cytokinesis. Associates with the precursors of the 25S and 5.8S rRNAs. This Saccharomyces cerevisiae (strain ATCC 204508 / S288c) (Baker's yeast) protein is Ribosome biogenesis protein 15.